A 132-amino-acid polypeptide reads, in one-letter code: Small ribosomal subunit protein uS11 (132 aa).

This sequence belongs to the universal ribosomal protein uS11 family. In terms of assembly, part of the 30S ribosomal subunit. Interacts with proteins S7 and S18. Binds to IF-3.

In terms of biological role, located on the platform of the 30S subunit, it bridges several disparate RNA helices of the 16S rRNA. Forms part of the Shine-Dalgarno cleft in the 70S ribosome. The chain is Small ribosomal subunit protein uS11 from Clostridioides difficile (strain 630) (Peptoclostridium difficile).